The chain runs to 90 residues: Bombyxin B-12 (90 aa).

Positions 1 to 20 (MMKTTIMFMLVVVISLTYSS) are cleaved as a signal peptide. Disulfide bonds link Cys-30–Cys-76, Cys-42–Cys-89, and Cys-75–Cys-80. Positions 49–67 (SGAQYAPYFWTRQYLGSRG) are cleaved as a propeptide — c peptide like.

This sequence belongs to the insulin family. Heterodimer of a B chain and an A chain linked by two disulfide bonds.

It localises to the secreted. Brain peptide responsible for activation of prothoracic glands to produce ecdysone in insects. The polypeptide is Bombyxin B-12 (BBXB12) (Bombyx mori (Silk moth)).